The primary structure comprises 286 residues: ATP synthase gamma chain (286 aa).

Belongs to the ATPase gamma chain family. In terms of assembly, F-type ATPases have 2 components, CF(1) - the catalytic core - and CF(0) - the membrane proton channel. CF(1) has five subunits: alpha(3), beta(3), gamma(1), delta(1), epsilon(1). CF(0) has three main subunits: a, b and c.

The protein localises to the cell inner membrane. Functionally, produces ATP from ADP in the presence of a proton gradient across the membrane. The gamma chain is believed to be important in regulating ATPase activity and the flow of protons through the CF(0) complex. The chain is ATP synthase gamma chain from Shewanella woodyi (strain ATCC 51908 / MS32).